We begin with the raw amino-acid sequence, 209 residues long: Pyroglutamyl-peptidase 1 (209 aa).

Active-site residues include Glu-85, Cys-149, and His-168.

Belongs to the peptidase C15 family. In terms of assembly, monomer.

It is found in the cytoplasm. It carries out the reaction Release of an N-terminal pyroglutamyl group from a polypeptide, the second amino acid generally not being Pro.. Its function is as follows. Removes 5-oxoproline from various penultimate amino acid residues except L-proline. This chain is Pyroglutamyl-peptidase 1 (Pgpep1), found in Rattus norvegicus (Rat).